The chain runs to 749 residues: NAD(P)H-quinone oxidoreductase subunit 5, chloroplastic (749 aa).

The next 17 membrane-spanning stretches (helical) occupy residues 9–29 (WIIP…LLLF), 40–60 (WAFQ…NLSI), 89–109 (IDPL…MVLI), 125–145 (FAYM…SNLI), 147–167 (IYIF…FWFT), 185–205 (GDFG…SFEF), 219–239 (NEVN…GAVA), 258–278 (TPIS…FLVA), 290–312 (IMNF…ALAQ), 327–347 (LGYM…FHLI), 354–374 (ALLF…VGYC), 396–416 (TSFL…CFWS), 425–445 (WLYS…TAFY), 549–569 (LFPI…GIPF), 608–628 (VFSV…YKPV), 694–714 (IIDG…EVIK), and 725–745 (LFFY…LNVF).

This sequence belongs to the complex I subunit 5 family. In terms of assembly, NDH is composed of at least 16 different subunits, 5 of which are encoded in the nucleus.

The protein resides in the plastid. It is found in the chloroplast thylakoid membrane. It carries out the reaction a plastoquinone + NADH + (n+1) H(+)(in) = a plastoquinol + NAD(+) + n H(+)(out). The catalysed reaction is a plastoquinone + NADPH + (n+1) H(+)(in) = a plastoquinol + NADP(+) + n H(+)(out). NDH shuttles electrons from NAD(P)H:plastoquinone, via FMN and iron-sulfur (Fe-S) centers, to quinones in the photosynthetic chain and possibly in a chloroplast respiratory chain. The immediate electron acceptor for the enzyme in this species is believed to be plastoquinone. Couples the redox reaction to proton translocation, and thus conserves the redox energy in a proton gradient. This Atractylodes lancea (Atractylodes japonica) protein is NAD(P)H-quinone oxidoreductase subunit 5, chloroplastic (ndhF).